A 393-amino-acid polypeptide reads, in one-letter code: Yellow-related salivary protein SP03B (393 aa).

The signal sequence occupies residues 1 to 18; the sequence is MKIFLCLIAVVFLQGVVG. Asn29 carries an N-linked (GlcNAc...) asparagine glycan.

This sequence belongs to the major royal jelly protein family. As to expression, female salivary gland (at protein level).

The protein resides in the secreted. Its function is as follows. Probably modulates blood feeding of sand flies on vertebrate species by binding and sequestering different mediators involved in the host response. Binds biogenic amines. Binds serotonin with high affinity. Poorly binds histamine. Does not bind dopamine, noradrenaline, adrenaline and octopamine. The sequence is that of Yellow-related salivary protein SP03B from Phlebotomus perniciosus (Phlebotomine sand fly).